A 341-amino-acid polypeptide reads, in one-letter code: MLTLHLQDDDVAAIDAVADELSRRYDSVESTEFQAESRLYADELPRRVRRALHEYRSTEKSGILVVTGLPVDDSALGATPADRRHKPVPSTSLRQDIAFYLIANLLGDPIGWATQQDGFIMHDVYPVQGFEHEQIGWGSEETLTWHTEDAFHPLRTDYLGLMCLRNPDGVETTACDIADVEIDDETRETLSQERFRILPDDAHRIHGKAPGDESARESALRERSRQRVASALESPDPVAVLFGDRDDPYLRIDPHYMQGVQGETEQRALETIGAAIDDAMSGVVLSPGDIVFIDNYRVVHGRKPFRARFDGTDRWLRRLNIARDLRKSREARLAATTRVIY.

Fe cation-binding residues include H146 and E148. The segment at 203 to 223 is disordered; the sequence is HRIHGKAPGDESARESALRER. H300 serves as a coordination point for Fe cation.

This sequence belongs to the clavaminate synthase family. Fe(2+) serves as cofactor.

The enzyme catalyses L-enduracididine + 2-oxoglutarate + O2 = (3S)-3-hydroxy-L-enduracididine + succinate + CO2. It participates in antibiotic biosynthesis. In terms of biological role, hydroxylates the beta carbon of free L-enduracididine to produce (3S)-3-hydroxy-L-enduracididine in biosynthesis of the nonproteinogenic amino acid beta-hydroxyenduracididine, a component of antibiotic mannopeptimycin. In Streptomyces hygroscopicus, this protein is Enduracididine beta-hydroxylase (mppO).